Reading from the N-terminus, the 4574-residue chain is E3 ubiquitin-protein ligase MYCBP2 (4574 aa).

Disordered stretches follow at residues 92-115 (RGKKALSKKKLKRRQKVKSKVKTR) and 599-620 (SASKGEDGESTKSRRQPKPYKP). RCC1 repeat units lie at residues 591 to 646 (DGSV…IVTK), 690 to 746 (SGEV…MMCQ), 943 to 993 (NGDV…VLLM), and 995 to 1051 (GQVF…LRID). Positions 611–620 (SRRQPKPYKP) are enriched in basic residues. Residues Cys-1733 and Cys-1850 are joined by a disulfide bond. Disordered stretches follow at residues 1976-1998 (APPTFNPNQSTDSTTGNQPEQGL) and 2313-2332 (LQRLPGTSSNSATGTDLTFG). 2 stretches are compositionally biased toward polar residues: residues 1981–1998 (NPNQSTDSTTGNQPEQGL) and 2317–2328 (PGTSSNSATGTD). One copy of the Filamin repeat lies at 2336–2417 (APKLEATYEP…IHVTIDGIEI (82 aa)). Disordered regions lie at residues 2613 to 2824 (GFDY…PSPH), 2845 to 2922 (SNDE…KQAM), 3085 to 3116 (SPGSSAILKKKENEKDSKKTKKEKKKKEKAEV), 3345 to 3365 (PGSNMKSMPPSLETSPITDSD), and 3505 to 3526 (FETEEEEDEENKGNKENLEQEK). Composition is skewed to basic and acidic residues over residues 2639–2663 (HRQESRSSKTDSHSNRSVDQVKSKN) and 2678–2688 (DTGKLRSDSHS). The span at 2716-2729 (NPGSRSSSPKQKTF) shows a compositional bias: polar residues. A compositionally biased stretch (low complexity) spans 2730-2745 (TSGRSSPSSTSSPRSS). Basic and acidic residues-rich tracts occupy residues 2761 to 2772 (VHLDPPRERSKS), 2854 to 2864 (SELHNAEEGSS), and 2874 to 2883 (PVKEELESRS). Composition is skewed to basic residues over residues 2887-2900 (VSRKTSSRHVRPKK) and 3102-3111 (KKTKKEKKKK). Basic and acidic residues predominate over residues 3515–3526 (NKGNKENLEQEK). The 179-residue stretch at 3617-3795 (FNISVQSGYE…SVAQQKNCEA (179 aa)) folds into the DOC domain. Residues 3815–3841 (GDAEPTPEQEEKNLLSSPEGEDKAPSD) are disordered. Zn(2+) is bound by residues Cys-4324, Cys-4327, Cys-4342, His-4344, His-4347, Cys-4350, Cys-4371, Cys-4374, Cys-4440, and Cys-4443. The segment at 4324-4375 (CMICFTEALSAAPAIQLDCSHVFHLQCTRRVLENRWLGPRITFGFMSCPICK) adopts an RING-type; atypical zinc-finger fold. Residues 4435–4572 (YAYYVCFKCK…LGCGVCRNAH (138 aa)) form a tandem cysteine domain region. Cys-4454 is a catalytic residue. Cys-4471, Cys-4474, Cys-4483, His-4486, Cys-4495, Cys-4498, and Cys-4499 together coordinate Zn(2+). The active site involves Cys-4506. The Zn(2+) site is built by Cys-4513, Cys-4516, Cys-4534, Cys-4548, His-4554, Cys-4565, and Cys-4568.

Belongs to the RING-Cys relay (RCR) family. Widely expressed when the visual system begins developing. In the eye, expressed in all cells, including retinal ganglion cells, with no obvious gradient.

It localises to the nucleus. The protein localises to the cell projection. Its subcellular location is the axon. The protein resides in the cytoplasm. It is found in the cytoskeleton. It carries out the reaction [E2 ubiquitin-conjugating enzyme]-S-ubiquitinyl-L-cysteine + [acceptor protein]-L-threonine = [E2 ubiquitin-conjugating enzyme]-L-cysteine + [acceptor protein]-3-O-ubiquitinyl-L-threonine.. It functions in the pathway protein modification; protein ubiquitination. Functionally, atypical E3 ubiquitin-protein ligase which specifically mediates ubiquitination of threonine and serine residues on target proteins, instead of ubiquitinating lysine residues. Shows esterification activity towards both threonine and serine, with a preference for threonine, and acts via two essential catalytic cysteine residues that relay ubiquitin to its substrate via thioester intermediates. Interacts with the E2 enzymes UBE2D1, UBE2D3, UBE2E1 and UBE2L3. Plays a key role in neural development, probably by mediating ubiquitination of threonine residues on target proteins. Involved in different processes such as regulation of neurite outgrowth, synaptic growth, synaptogenesis and axon degeneration. Required in the visual system for correct fasciculation, targeting and mapping of retinal axons. Acts as a regulator of pteridine synthesis. May play a role in the regulation of the circadian clock gene expression. This is E3 ubiquitin-protein ligase MYCBP2 from Danio rerio (Zebrafish).